Here is a 310-residue protein sequence, read N- to C-terminus: Malate dehydrogenase (310 aa).

Residues glycine 7–glycine 12 and aspartate 32 each bind NAD(+). Substrate-binding residues include arginine 81 and arginine 87. NAD(+)-binding positions include asparagine 94 and valine 117 to asparagine 119. Asparagine 119 and arginine 150 together coordinate substrate. Histidine 174 serves as the catalytic Proton acceptor.

This sequence belongs to the LDH/MDH superfamily. MDH type 3 family.

It carries out the reaction (S)-malate + NAD(+) = oxaloacetate + NADH + H(+). In terms of biological role, catalyzes the reversible oxidation of malate to oxaloacetate. This chain is Malate dehydrogenase, found in Chlorobium chlorochromatii (strain CaD3).